The sequence spans 380 residues: E3 ubiquitin-protein ligase PHF7 (380 aa).

The interval 1-23 (MRTIKEKKEHPRLRKTARTKKVT) is disordered. Residues 10–23 (HPRLRKTARTKKVT) show a composition bias toward basic residues. Residues 30-68 (GPVCLLCFQEPGDPEKLGEFLQKDNLCVHYFCLILSSKL) form a C2HC pre-PHD-type zinc finger. Cysteine 33, cysteine 36, histidine 58, and cysteine 61 together coordinate Zn(2+). The tract at residues 67–92 (KLPQKGQPNRGLHGFMPEDIKKEAAR) is required for interaction and ubiquitination of the nucleosome core particle. A PHD-type zinc finger spans residues 96–145 (KVCFVCKRKGAAIRCQKDQCVQNFHLPCGQERGCLSQFFGEYKSYCGKHR). Cysteine 98, cysteine 101, cysteine 110, cysteine 115, histidine 120, cysteine 123, cysteine 141, histidine 144, cysteine 159, cysteine 162, cysteine 178, cysteine 179, histidine 185, cysteine 188, cysteine 203, cysteine 206, cysteine 247, cysteine 252, cysteine 272, cysteine 275, histidine 281, cysteine 284, cysteine 296, and cysteine 299 together coordinate Zn(2+). Positions 150–306 (IHQRSFGESC…NECLPASTED (157 aa)) are required for interaction with ubiquitinated UBE2D2. The segment at 159–207 (CVLCCEDLSRASVENIRSPCCSQAIYHRKCIQKYAHTSAKHFFKCPQCN) adopts an RING-type; degenerate zinc-finger fold. The segment at 243–300 (RYQHCDAPICLYEQGRDSFEDEGRWRLILCATCGSHGTHRDCSSLRPNSKKWECNECL) is required for association with and ubiquitination of H3. Residues 352–367 (EKPESSSGSSCQSWRS) show a composition bias toward low complexity. The interval 352–380 (EKPESSSGSSCQSWRSKGIKVTKDCKKSK) is disordered.

Interacts with MEF2C; the interaction promotes MEF2C binding to its transcription targets. Interacts with GATA4; the interaction promotes GATA4 binding to its transcription targets. Interacts with UBE2D2; the interaction inhibits cleavage of PHF7 and promotes association of the complex with the nucleosome core particle.

Its subcellular location is the nucleus. It catalyses the reaction S-ubiquitinyl-[E2 ubiquitin-conjugating enzyme]-L-cysteine + [acceptor protein]-L-lysine = [E2 ubiquitin-conjugating enzyme]-L-cysteine + N(6)-ubiquitinyl-[acceptor protein]-L-lysine.. It participates in protein modification; protein ubiquitination. Its function is as follows. E3 ubiquitin-protein ligase which ubiquitinates histone H3 at 'Lys-14'. Required for male fertility, via inhibition of SPOP-mediated BRDT degradation when in the presence of acetylated histone H4 in early condensing spermatids. Stabilization of BRDT allows it to facilitate histone removal in early condensing spermatids and promote the progression of histone-to-protamine exchange. Promotes the expression of steroidogenesis proteins in the testes, and as a result plays a role in maintaining testosterone levels and repressing osteoclastogenesis. Promotes transcription of cardiac enhancer genes by facilitating binding of cardiac transcription factors such as MEF2C and GATA4 to target gene promoters. Ubiquitinates histone H4. Ubiquitinates histone H2A and H3 as part of the nucleosome core particle. The protein is E3 ubiquitin-protein ligase PHF7 of Rattus norvegicus (Rat).